The primary structure comprises 98 residues: Aspartyl/glutamyl-tRNA(Asn/Gln) amidotransferase subunit C (98 aa).

Belongs to the GatC family. In terms of assembly, heterotrimer of A, B and C subunits.

It carries out the reaction L-glutamyl-tRNA(Gln) + L-glutamine + ATP + H2O = L-glutaminyl-tRNA(Gln) + L-glutamate + ADP + phosphate + H(+). The catalysed reaction is L-aspartyl-tRNA(Asn) + L-glutamine + ATP + H2O = L-asparaginyl-tRNA(Asn) + L-glutamate + ADP + phosphate + 2 H(+). Functionally, allows the formation of correctly charged Asn-tRNA(Asn) or Gln-tRNA(Gln) through the transamidation of misacylated Asp-tRNA(Asn) or Glu-tRNA(Gln) in organisms which lack either or both of asparaginyl-tRNA or glutaminyl-tRNA synthetases. The reaction takes place in the presence of glutamine and ATP through an activated phospho-Asp-tRNA(Asn) or phospho-Glu-tRNA(Gln). In Microcystis aeruginosa (strain NIES-843 / IAM M-2473), this protein is Aspartyl/glutamyl-tRNA(Asn/Gln) amidotransferase subunit C.